The following is a 185-amino-acid chain: ATP-dependent protease subunit HslV (185 aa).

T12 is a catalytic residue. 3 residues coordinate Na(+): A168, C171, and T174.

Belongs to the peptidase T1B family. HslV subfamily. A double ring-shaped homohexamer of HslV is capped on each side by a ring-shaped HslU homohexamer. The assembly of the HslU/HslV complex is dependent on binding of ATP.

The protein localises to the cytoplasm. The enzyme catalyses ATP-dependent cleavage of peptide bonds with broad specificity.. Its activity is regulated as follows. Allosterically activated by HslU binding. In terms of biological role, protease subunit of a proteasome-like degradation complex believed to be a general protein degrading machinery. The polypeptide is ATP-dependent protease subunit HslV (Cereibacter sphaeroides (strain KD131 / KCTC 12085) (Rhodobacter sphaeroides)).